A 648-amino-acid chain; its full sequence is Sodium/nucleoside cotransporter 1 (648 aa).

Residues 1–80 lie on the Cytoplasmic side of the membrane; it reads MADNTQRQRE…ARSFCREHRQ (80 aa). The helical transmembrane segment at 81–104 threads the bilayer; that stretch reads LFGWICKGLLSTACLGFLMVACLL. Residues 105–109 lie on the Extracellular side of the membrane; that stretch reads DLQRA. A helical transmembrane segment spans residues 110–128; sequence LALLIITCVVLVFLAYDLL. Topologically, residues 129 to 147 are cytoplasmic; the sequence is KRLLGSKLRRCVKFQGHSC. A helical membrane pass occupies residues 148–167; sequence LSLWLKRGLALAAGVGLILW. At 168 to 178 the chain is on the extracellular side; that stretch reads LSLDTAQRPEQ. The helical transmembrane segment at 179 to 195 threads the bilayer; the sequence is LVSFAGICVFLVLLFAG. The Cytoplasmic portion of the chain corresponds to 196-201; it reads SKHHRA. Residues 202–222 traverse the membrane as a helical segment; sequence VSWRAVSWGLGLQFVLGLFVI. Residues 223-261 lie on the Extracellular side of the membrane; that stretch reads RTEPGFIAFQWLGDQIQVFLSYTEAGSSFVFGEALVKDV. Residues 262 to 283 form a helical membrane-spanning segment; that stretch reads FAFQVLPIIIFFSCVMSVLYYL. The Cytoplasmic segment spans residues 284–294; that stretch reads GLMQWVILKIA. The helical transmembrane segment at 295-318 threads the bilayer; sequence WLMQVTMGTSATETLSVAGNIFVS. The Extracellular portion of the chain corresponds to 319-337; it reads QTEAPLLIRPYLADMTLSE. Residues 338-360 traverse the membrane as a helical segment; it reads VHVVMTGGYATIAGSLLGAYISF. Residues 361–366 lie on the Cytoplasmic side of the membrane; it reads GIDAAS. The chain crosses the membrane as a helical span at residues 367-386; that stretch reads LIAASVMAAPCALALSKLVY. Topologically, residues 387–423 are extracellular; that stretch reads PEVEESKFRSENGVKLTYGDAQNLLEAASAGAAISVK. The helical transmembrane segment at 424-446 threads the bilayer; the sequence is VVANIAANLIAFLAVLAFVNAAL. Residues 447–457 lie on the Cytoplasmic side of the membrane; it reads SWLGDMVDIQG. The helical transmembrane segment at 458 to 479 threads the bilayer; sequence LSFQLICSYVLRPVAFLMGVAW. The Extracellular portion of the chain corresponds to 480–534; sequence EDCPVVAELLGIKFFLNEFVAYQELSQYKQRRLAGAEEWLGDKKQWISVRAEILT. Residues 535–558 form a helical membrane-spanning segment; it reads TYALCGFANFSSIGIMLGGLTSLV. Over 559–569 the chain is Cytoplasmic; sequence PQRRSDFSQIV. The helical transmembrane segment at 570–592 threads the bilayer; sequence LRALITGAFVSLLNACVAGILYV. The Extracellular portion of the chain corresponds to 593-648; sequence PRGVEVDCVSLLNQTVSSSSFEVYLCCRQVFQSTSSEFSQVALDNCCRFYNHTVCT. N-linked (GlcNAc...) asparagine glycans are attached at residues Asn-605 and Asn-643.

It belongs to the concentrative nucleoside transporter (CNT) (TC 2.A.41) family. Post-translationally, N-glycosylated. N-glycosylation is required for localization to the plasma membrane and the transporter activity. As to expression, expressed predominantly in the brush-border membranes of the polarized epithelial cells of jejunum and renal cortical tubules and in the bile canalicular membranes of liver parenchymal cells.

It is found in the cell membrane. The protein localises to the apical cell membrane. It carries out the reaction uridine(out) + Na(+)(out) = uridine(in) + Na(+)(in). The catalysed reaction is thymidine(out) + Na(+)(out) = thymidine(in) + Na(+)(in). The enzyme catalyses cytidine(out) + Na(+)(out) = cytidine(in) + Na(+)(in). It catalyses the reaction adenosine(out) + Na(+)(out) = adenosine(in) + Na(+)(in). With respect to regulation, due to its high apparent affinity but slow transport, adenosine could act as a negative regulator of pyrimidine transport under some conditions. In terms of biological role, sodium and pyrimidine nucleoside symporter of the plasma membrane that imports uridine, thymidine and cytidine into cells by coupling their transport to the transmembrane sodium electrochemical gradient. Also transports adenosine, an atypical substrate transported with high apparent affinity, but low maximum velocity. Therefore, exhibits the transport characteristics of the nucleoside transport system cit or N2 subtype (N2/cit). Involved in renal nucleoside (re)absorption. The protein is Sodium/nucleoside cotransporter 1 of Rattus norvegicus (Rat).